Consider the following 273-residue polypeptide: 4-diphosphocytidyl-2-C-methyl-D-erythritol kinase (273 aa).

Lys12 is a catalytic residue. Pro90–Ala100 provides a ligand contact to ATP. The active site involves Asp122.

Belongs to the GHMP kinase family. IspE subfamily.

The catalysed reaction is 4-CDP-2-C-methyl-D-erythritol + ATP = 4-CDP-2-C-methyl-D-erythritol 2-phosphate + ADP + H(+). Its pathway is isoprenoid biosynthesis; isopentenyl diphosphate biosynthesis via DXP pathway; isopentenyl diphosphate from 1-deoxy-D-xylulose 5-phosphate: step 3/6. Its function is as follows. Catalyzes the phosphorylation of the position 2 hydroxy group of 4-diphosphocytidyl-2C-methyl-D-erythritol. In Paracoccus denitrificans (strain Pd 1222), this protein is 4-diphosphocytidyl-2-C-methyl-D-erythritol kinase.